Reading from the N-terminus, the 360-residue chain is S-adenosylmethionine:tRNA ribosyltransferase-isomerase (360 aa).

It belongs to the QueA family. In terms of assembly, monomer.

The protein localises to the cytoplasm. The enzyme catalyses 7-aminomethyl-7-carbaguanosine(34) in tRNA + S-adenosyl-L-methionine = epoxyqueuosine(34) in tRNA + adenine + L-methionine + 2 H(+). It participates in tRNA modification; tRNA-queuosine biosynthesis. Functionally, transfers and isomerizes the ribose moiety from AdoMet to the 7-aminomethyl group of 7-deazaguanine (preQ1-tRNA) to give epoxyqueuosine (oQ-tRNA). In Rhizobium meliloti (strain 1021) (Ensifer meliloti), this protein is S-adenosylmethionine:tRNA ribosyltransferase-isomerase.